The sequence spans 390 residues: Digeranylgeranylglycerophospholipid reductase (390 aa).

FAD-binding residues include alanine 18, glutamate 37, cysteine 48, alanine 49, alanine 51, arginine 98, valine 122, aspartate 278, glycine 290, and isoleucine 291. Residue valine 368 coordinates a 2,3-bis-O-(geranylgeranyl)-sn-glycerol 1-phospholipid.

Belongs to the geranylgeranyl reductase family. DGGGPL reductase subfamily. Requires FAD as cofactor.

It catalyses the reaction a 2,3-bis-O-phytanyl-sn-glycerol 1-phospholipid + 8 A = a 2,3-bis-O-(geranylgeranyl)-sn-glycerol 1-phospholipid + 8 AH2. It carries out the reaction 2,3-bis-O-(phytanyl)-sn-glycerol 1-phosphate + 8 A = 2,3-bis-O-(geranylgeranyl)-sn-glycerol 1-phosphate + 8 AH2. The catalysed reaction is CDP-2,3-bis-O-(geranylgeranyl)-sn-glycerol + 8 AH2 = CDP-2,3-bis-O-(phytanyl)-sn-glycerol + 8 A. The enzyme catalyses archaetidylserine + 8 AH2 = 2,3-bis-O-phytanyl-sn-glycero-3-phospho-L-serine + 8 A. The protein operates within membrane lipid metabolism; glycerophospholipid metabolism. Is involved in the reduction of 2,3-digeranylgeranylglycerophospholipids (unsaturated archaeols) into 2,3-diphytanylglycerophospholipids (saturated archaeols) in the biosynthesis of archaeal membrane lipids. Catalyzes the formation of archaetidic acid (2,3-di-O-phytanyl-sn-glyceryl phosphate) from 2,3-di-O-geranylgeranylglyceryl phosphate (DGGGP) via the hydrogenation of each double bond of the isoprenoid chains. Is also probably able to reduce double bonds of geranyl groups in CDP-2,3-bis-O-(geranylgeranyl)-sn-glycerol and archaetidylserine, thus acting at various stages in the biosynthesis of archaeal membrane lipids. The polypeptide is Digeranylgeranylglycerophospholipid reductase (Methanococcus maripaludis (strain C5 / ATCC BAA-1333)).